A 179-amino-acid chain; its full sequence is Large ribosomal subunit protein uL5 (179 aa).

It belongs to the universal ribosomal protein uL5 family. As to quaternary structure, part of the 50S ribosomal subunit; part of the 5S rRNA/L5/L18/L25 subcomplex. Contacts the 5S rRNA and the P site tRNA. Forms a bridge to the 30S subunit in the 70S ribosome.

Functionally, this is one of the proteins that bind and probably mediate the attachment of the 5S RNA into the large ribosomal subunit, where it forms part of the central protuberance. In the 70S ribosome it contacts protein S13 of the 30S subunit (bridge B1b), connecting the 2 subunits; this bridge is implicated in subunit movement. Contacts the P site tRNA; the 5S rRNA and some of its associated proteins might help stabilize positioning of ribosome-bound tRNAs. This Mannheimia succiniciproducens (strain KCTC 0769BP / MBEL55E) protein is Large ribosomal subunit protein uL5.